Here is a 568-residue protein sequence, read N- to C-terminus: 2-succinyl-5-enolpyruvyl-6-hydroxy-3-cyclohexene-1-carboxylate synthase (568 aa).

This sequence belongs to the TPP enzyme family. MenD subfamily. As to quaternary structure, homodimer. Mg(2+) serves as cofactor. Requires Mn(2+) as cofactor. The cofactor is thiamine diphosphate.

The catalysed reaction is isochorismate + 2-oxoglutarate + H(+) = 5-enolpyruvoyl-6-hydroxy-2-succinyl-cyclohex-3-ene-1-carboxylate + CO2. The protein operates within quinol/quinone metabolism; 1,4-dihydroxy-2-naphthoate biosynthesis; 1,4-dihydroxy-2-naphthoate from chorismate: step 2/7. It functions in the pathway quinol/quinone metabolism; menaquinone biosynthesis. Its function is as follows. Catalyzes the thiamine diphosphate-dependent decarboxylation of 2-oxoglutarate and the subsequent addition of the resulting succinic semialdehyde-thiamine pyrophosphate anion to isochorismate to yield 2-succinyl-5-enolpyruvyl-6-hydroxy-3-cyclohexene-1-carboxylate (SEPHCHC). In Haemophilus influenzae (strain PittEE), this protein is 2-succinyl-5-enolpyruvyl-6-hydroxy-3-cyclohexene-1-carboxylate synthase.